The sequence spans 100 residues: Urease subunit gamma (100 aa).

This sequence belongs to the urease gamma subunit family. In terms of assembly, heterotrimer of UreA (gamma), UreB (beta) and UreC (alpha) subunits. Three heterotrimers associate to form the active enzyme.

It localises to the cytoplasm. It carries out the reaction urea + 2 H2O + H(+) = hydrogencarbonate + 2 NH4(+). It participates in nitrogen metabolism; urea degradation; CO(2) and NH(3) from urea (urease route): step 1/1. This Leptothrix cholodnii (strain ATCC 51168 / LMG 8142 / SP-6) (Leptothrix discophora (strain SP-6)) protein is Urease subunit gamma.